The sequence spans 427 residues: Transcobalamin-2 (427 aa).

An N-terminal signal peptide occupies residues 1 to 18 (MRHLGALLFLLGVLGALA). Disulfide bonds link cysteine 21–cysteine 267, cysteine 116–cysteine 309, and cysteine 165–cysteine 205. Residues glutamine 104, 152–156 (TSYYQ), histidine 190, 190–194 (HHSVD), asparagine 242, serine 245, glutamine 291, and 395–397 (WQL) contribute to the cob(II)alamin site.

Belongs to the eukaryotic cobalamin transport proteins family. In terms of assembly, interacts with CD320 (via LDL-receptor class A domains).

The protein resides in the secreted. In terms of biological role, primary vitamin B12-binding and transport protein. Delivers cobalamin to cells. The sequence is that of Transcobalamin-2 (TCN2) from Pongo abelii (Sumatran orangutan).